Here is a 121-residue protein sequence, read N- to C-terminus: MASAAKGKILAVIGDEDTVVGFLLGGVGELNKARKPNYLIVDKQTTVQEIEEAFNGFCARDDIAIILINQHIAEMIRYAVDNHTQSIPAVLEIPSKEAPYDPSKDSILNRARGLFNPEDFR.

Belongs to the V-ATPase F subunit family. In terms of assembly, V-ATPase is a heteromultimeric enzyme made up of two complexes: the ATP-hydrolytic V1 complex and the proton translocation V0 complex. The V1 complex consists of three catalytic AB heterodimers that form a heterohexamer, three peripheral stalks each consisting of EG heterodimers, one central rotor including subunits D and F, and the regulatory subunits C and H. The proton translocation complex V0 consists of the proton transport subunit a, a ring of proteolipid subunits c9c'', rotary subunit d, subunits e and f, and the accessory subunits vah-19/Ac45 and vah-20/PRR.

Functionally, subunit of the V1 complex of vacuolar(H+)-ATPase (V-ATPase), a multisubunit enzyme composed of a peripheral complex (V1) that hydrolyzes ATP and a membrane integral complex (V0) that translocates protons. V-ATPase is responsible for acidifying and maintaining the pH of intracellular compartments and in some cell types, is targeted to the plasma membrane, where it is responsible for acidifying the extracellular environment. Required along with other vacuolar ATPase components for the removal of protein aggregates which form in immature oocytes in the distal gonad. This removal occurs as the oocytes mature and move to the proximal gonad, is triggered by the introduction of sperm through mating and occurs before fertilization. The introduction of sperm triggers V-ATPase accumulation in proximal oocytes and induces lysosomal acidification which leads to engulfing of protein aggregates by lysosomes and subsequent clearance of the aggregates. Lysosomal acidification also leads to changes in mitochondrial morphology and function. Mitochondria in distal immature oocytes are fragmented, produce high levels of reactive oxygen species (ROS) and have high membrane potential, indicative of metabolic inactivity. In contrast, mitochondria in proximal mature oocytes are tubular with lower ROS levels and membrane potential, indicative of an active metabolic state required for aggregate mobilization before clearance. This is Probable V-type proton ATPase subunit F from Caenorhabditis elegans.